Here is a 231-residue protein sequence, read N- to C-terminus: Cytochrome c oxidase subunit 2 (231 aa).

Topologically, residues 1–14 (MAHPSQLGLQDAAS) are mitochondrial intermembrane. Residues 15-45 (PVMEELLHFHDHALMIVFLISTLVFYIILAM) traverse the membrane as a helical segment. Residues 46 to 59 (MTTKMTDKYILDAQ) are Mitochondrial matrix-facing. A helical membrane pass occupies residues 60–87 (EIEIVWTLLPAIVLILVALPSLRILYLI). Topologically, residues 88-231 (DEVENPHLTI…WSSSMLEEAX (144 aa)) are mitochondrial intermembrane. Positions 161, 196, 198, 200, 204, and 207 each coordinate Cu cation. Residue E198 coordinates Mg(2+).

This sequence belongs to the cytochrome c oxidase subunit 2 family. Component of the cytochrome c oxidase (complex IV, CIV), a multisubunit enzyme composed of 14 subunits. The complex is composed of a catalytic core of 3 subunits MT-CO1, MT-CO2 and MT-CO3, encoded in the mitochondrial DNA, and 11 supernumerary subunits COX4I, COX5A, COX5B, COX6A, COX6B, COX6C, COX7A, COX7B, COX7C, COX8 and NDUFA4, which are encoded in the nuclear genome. The complex exists as a monomer or a dimer and forms supercomplexes (SCs) in the inner mitochondrial membrane with NADH-ubiquinone oxidoreductase (complex I, CI) and ubiquinol-cytochrome c oxidoreductase (cytochrome b-c1 complex, complex III, CIII), resulting in different assemblies (supercomplex SCI(1)III(2)IV(1) and megacomplex MCI(2)III(2)IV(2)). Found in a complex with TMEM177, COA6, COX18, COX20, SCO1 and SCO2. Interacts with TMEM177 in a COX20-dependent manner. Interacts with COX20. Interacts with COX16. It depends on Cu cation as a cofactor.

It is found in the mitochondrion inner membrane. The catalysed reaction is 4 Fe(II)-[cytochrome c] + O2 + 8 H(+)(in) = 4 Fe(III)-[cytochrome c] + 2 H2O + 4 H(+)(out). In terms of biological role, component of the cytochrome c oxidase, the last enzyme in the mitochondrial electron transport chain which drives oxidative phosphorylation. The respiratory chain contains 3 multisubunit complexes succinate dehydrogenase (complex II, CII), ubiquinol-cytochrome c oxidoreductase (cytochrome b-c1 complex, complex III, CIII) and cytochrome c oxidase (complex IV, CIV), that cooperate to transfer electrons derived from NADH and succinate to molecular oxygen, creating an electrochemical gradient over the inner membrane that drives transmembrane transport and the ATP synthase. Cytochrome c oxidase is the component of the respiratory chain that catalyzes the reduction of oxygen to water. Electrons originating from reduced cytochrome c in the intermembrane space (IMS) are transferred via the dinuclear copper A center (CU(A)) of subunit 2 and heme A of subunit 1 to the active site in subunit 1, a binuclear center (BNC) formed by heme A3 and copper B (CU(B)). The BNC reduces molecular oxygen to 2 water molecules using 4 electrons from cytochrome c in the IMS and 4 protons from the mitochondrial matrix. This is Cytochrome c oxidase subunit 2 (MT-CO2) from Latimeria chalumnae (Coelacanth).